Reading from the N-terminus, the 179-residue chain is Large ribosomal subunit protein uL6 (179 aa).

This sequence belongs to the universal ribosomal protein uL6 family. Part of the 50S ribosomal subunit.

This protein binds to the 23S rRNA, and is important in its secondary structure. It is located near the subunit interface in the base of the L7/L12 stalk, and near the tRNA binding site of the peptidyltransferase center. The polypeptide is Large ribosomal subunit protein uL6 (Nocardioides sp. (strain ATCC BAA-499 / JS614)).